Consider the following 1215-residue polypeptide: DNA-directed RNA polymerase subunit beta' (1215 aa).

Positions 60, 62, 75, and 78 each coordinate Zn(2+). The Mg(2+) site is built by Asp-450, Asp-452, and Asp-454. Zn(2+)-binding residues include Cys-818, Cys-892, Cys-899, and Cys-902.

This sequence belongs to the RNA polymerase beta' chain family. In terms of assembly, the RNAP catalytic core consists of 2 alpha, 1 beta, 1 beta' and 1 omega subunit. When a sigma factor is associated with the core the holoenzyme is formed, which can initiate transcription. The cofactor is Mg(2+). It depends on Zn(2+) as a cofactor.

It carries out the reaction RNA(n) + a ribonucleoside 5'-triphosphate = RNA(n+1) + diphosphate. In terms of biological role, DNA-dependent RNA polymerase catalyzes the transcription of DNA into RNA using the four ribonucleoside triphosphates as substrates. This chain is DNA-directed RNA polymerase subunit beta', found in Streptococcus sanguinis (strain SK36).